A 248-amino-acid chain; its full sequence is uncharacterized protein (248 aa).

The N-terminal stretch at 1–23 (MLKKIVIGVTATAAFGIGAGALA) is a signal peptide.

It is found in the cell outer membrane. This is an uncharacterized protein from Coxiella burnetii (strain RSA 493 / Nine Mile phase I).